Reading from the N-terminus, the 361-residue chain is MTPQPLADNLSPPDPARLAQSIKDWGRELGFQQVGISDVELGEHEAHLQRWLEAGYHGEMDYMAAHGSKRSRPAELVPGTLRVISLRMDYLPGDTRMAQVLATPEKAYVSRYALGRDYHKLIRKRLQQLAERIQAEVGPFGFRAFVDSAPVLEKAIAEQAGLGWIGKNTLVLNRKAGSYFFLGELFVDMPLPVDPAMDSEHCGRCSACLDICPTAAFVGPYRLDARRCISYLTIEYKGAIPLELRPLIGNRVFGCDDCQIVCPWNRFARPTGQGDFQPRHSLDNAELAELFLWSEEEFLGRTEGSPLRRAGYERWLRNLAVGLGNAPSTIPVLEALKARRGFPSELVREHVEWALRRHGET.

Asp147 (proton donor) is an active-site residue. A 4Fe-4S ferredoxin-type domain is found at 193 to 222 (VDPAMDSEHCGRCSACLDICPTAAFVGPYR). Positions 202, 205, 208, 212, 228, 255, 258, and 262 each coordinate [4Fe-4S] cluster.

This sequence belongs to the QueG family. In terms of assembly, monomer. The cofactor is cob(II)alamin. Requires [4Fe-4S] cluster as cofactor.

The protein localises to the cytoplasm. The enzyme catalyses epoxyqueuosine(34) in tRNA + AH2 = queuosine(34) in tRNA + A + H2O. It functions in the pathway tRNA modification; tRNA-queuosine biosynthesis. In terms of biological role, catalyzes the conversion of epoxyqueuosine (oQ) to queuosine (Q), which is a hypermodified base found in the wobble positions of tRNA(Asp), tRNA(Asn), tRNA(His) and tRNA(Tyr). The polypeptide is Epoxyqueuosine reductase (Pseudomonas aeruginosa (strain ATCC 15692 / DSM 22644 / CIP 104116 / JCM 14847 / LMG 12228 / 1C / PRS 101 / PAO1)).